We begin with the raw amino-acid sequence, 275 residues long: F-box only protein 50 (275 aa).

The disordered stretch occupies residues 1–67; the sequence is MEEVREGHAL…LPEPAQPSEA (67 aa). Pro residues predominate over residues 26–62; it reads PPSPRSPSPPPSPPPLPSPPSLPSPAAPEAPELPEPA. Phosphoserine occurs at positions 31, 37, and 49. In terms of domain architecture, FBA spans 95-273; it reads LLLRRPLYRN…VTDSSVSVQL (179 aa).

In terms of tissue distribution, expressed in the esophagus, oral cavity, skin, tongue and reproductive organs.

It is found in the cytoplasm. Its function is as follows. Promotes cell proliferation. The chain is F-box only protein 50 (NCCRP1) from Homo sapiens (Human).